The following is a 177-amino-acid chain: Large ribosomal subunit protein uL6 (177 aa).

Positions 157–171 (YKGKGVRYSDENVRR) are enriched in basic and acidic residues. A disordered region spans residues 157 to 177 (YKGKGVRYSDENVRRKEAKKK).

It belongs to the universal ribosomal protein uL6 family. Part of the 50S ribosomal subunit.

This protein binds to the 23S rRNA, and is important in its secondary structure. It is located near the subunit interface in the base of the L7/L12 stalk, and near the tRNA binding site of the peptidyltransferase center. This Pseudoalteromonas translucida (strain TAC 125) protein is Large ribosomal subunit protein uL6.